Consider the following 118-residue polypeptide: Alpha-amylase inhibitor 4 (118 aa).

Disulfide bonds link Cys7–Cys60, Cys21–Cys49, Cys30–Cys82, and Cys50–Cys101.

It belongs to the protease inhibitor I6 (cereal trypsin/alpha-amylase inhibitor) family.

Its subcellular location is the secreted. Alpha-amylase inhibitor. This Sorghum bicolor (Sorghum) protein is Alpha-amylase inhibitor 4.